A 357-amino-acid chain; its full sequence is Isopenicillin-N N-acyltransferase (357 aa).

6-aminopenicillanate-binding residues include D121 and R310.

It belongs to the peptidase C45 family. The active form of the enzyme results from processing of the 40-kDa monomeric precursor to a heterodimer containing subunits of 11 and 29 kDa. Post-translationally, the pre-AAT protein is synthesized as 40 kDa precursor which is then self-processed into an 11 kDa (protein A) and a 29 kDa (protein B). The B protein carries AAT activity.

It localises to the peroxisome matrix. It carries out the reaction isopenicillin N + phenylacetyl-CoA + H2O = penicillin G + L-2-aminoadipate + CoA + H(+). Its pathway is antibiotic biosynthesis; penicillin G biosynthesis; penicillin G from L-alpha-aminoadipate and L-cysteine and L-valine: step 3/3. Its function is as follows. Isopenicillin-N N-acyltransferase; part of the gene cluster that mediates the biosynthesis of penicillin, the world's most important antibiotic. AatA catalyzes the exchange of the alpha-aminoadipyl side chain of isopenicillin N for phenylacetic acid to yield penicillin. This step occurs in the peroxisomal matrix and the penM and paaT transporters are involved in the isopenicillin N and phenylacetic acid import into the peroxisome, respectively. The penicillin biosynthesis occurs via 3 enzymatic steps, the first corresponding to the production of the tripeptide N-[(5S)-5-amino-5-carboxypentanoyl]-L-cysteinyl-D-valine (LLD-ACV or ACV) by the NRPS acvA. The tripeptide ACV is then cyclized to isopenicillin N (IPN) by the isopenicillin N synthase ipnA that forms the beta-lactam nucleus. Finally, the alpha-aminoadipyl side chain is exchanged for phenylacetic acid by the isopenicillin N acyltransferase aatA to yield penicillin in the peroxisomal matrix. This is Isopenicillin-N N-acyltransferase from Penicillium chrysogenum (Penicillium notatum).